The primary structure comprises 367 residues: Dual specificity protein phosphatase 1 (367 aa).

Positions 20–137 (RAAQCLLLDC…FSASCPELCS (118 aa)) constitute a Rhodanese domain. In terms of domain architecture, Tyrosine-protein phosphatase spans 173-314 (GPVEILSFLY…LLQFESQVLA (142 aa)). The Phosphocysteine intermediate role is filled by Cys258. A phosphoserine; by MAPK1 and MAPK3 mark is found at Ser359 and Ser364.

It belongs to the protein-tyrosine phosphatase family. Non-receptor class dual specificity subfamily. Phosphorylation at Ser-359 and Ser-364 by MAPK1/ERK2 and MAPK3/ERK1 reduces its rate of degradation. In terms of processing, 'Lys-48'-linked polyubiquitinated by NEURL3, leading to proteasomal degradation. In terms of tissue distribution, brain. High level expression seen in the cingulate gyrus within the retrospinal cortex, ventral and medial divisions of the anterior thalamus and the medial geniculate nucleus. Expressed at moderate levels in the parietal and temporal cortex. Expressed in the cerebellum.

It localises to the nucleus. It carries out the reaction O-phospho-L-tyrosyl-[protein] + H2O = L-tyrosyl-[protein] + phosphate. It catalyses the reaction O-phospho-L-seryl-[protein] + H2O = L-seryl-[protein] + phosphate. The catalysed reaction is O-phospho-L-threonyl-[protein] + H2O = L-threonyl-[protein] + phosphate. Functionally, dual specificity phosphatase that dephosphorylates MAP kinase MAPK1/ERK2 on both 'Thr-183' and 'Tyr-185', regulating its activity during the meiotic cell cycle. This chain is Dual specificity protein phosphatase 1, found in Rattus norvegicus (Rat).